Reading from the N-terminus, the 276-residue chain is MSLSQPLFIKLLLKHWKIHNIPVSAGYLTYSTTLAIVPLVMVVFSIFTAFPIFQEATEQLKTLIYDNFAPNAGDMVEEYIDLFVANSKKMGIVSTIGLVVVALMLIQSIDETLNKMWRNHRKRSIFISFLLYAVILFIAPLLAGGSIAISSYIFSMAIFNENGLLSFSQQLLQYTPFLLIWLLFTTVYWLVPNTKVNILHAMLGAIVAAIFFTLGKQAFVWYISTFPSYQAIYGALAVLPIMLLWIHLSWQVVLFGGLITSTLNVYNEMKKGKLNL.

A run of 7 helical transmembrane segments spans residues 33–53 (TLAIVPLVMVVFSIFTAFPIF), 90–110 (MGIVSTIGLVVVALMLIQSID), 125–145 (IFISFLLYAVILFIAPLLAGG), 147–167 (IAISSYIFSMAIFNENGLLSF), 171–191 (LLQYTPFLLIWLLFTTVYWLV), 203–223 (LGAIVAAIFFTLGKQAFVWYI), and 239–259 (LPIMLLWIHLSWQVVLFGGLI).

The protein belongs to the UPF0761 family.

The protein localises to the cell inner membrane. This Actinobacillus pleuropneumoniae serotype 5b (strain L20) protein is UPF0761 membrane protein APL_1950.